We begin with the raw amino-acid sequence, 354 residues long: Chorismate synthase (354 aa).

NADP(+) is bound at residue R46. Residues 123-125 (RVS), 233-234 (NG), G273, 288-292 (KPTPS), and R314 each bind FMN.

Belongs to the chorismate synthase family. Homotetramer. FMNH2 is required as a cofactor.

It carries out the reaction 5-O-(1-carboxyvinyl)-3-phosphoshikimate = chorismate + phosphate. The protein operates within metabolic intermediate biosynthesis; chorismate biosynthesis; chorismate from D-erythrose 4-phosphate and phosphoenolpyruvate: step 7/7. Functionally, catalyzes the anti-1,4-elimination of the C-3 phosphate and the C-6 proR hydrogen from 5-enolpyruvylshikimate-3-phosphate (EPSP) to yield chorismate, which is the branch point compound that serves as the starting substrate for the three terminal pathways of aromatic amino acid biosynthesis. This reaction introduces a second double bond into the aromatic ring system. In Campylobacter curvus (strain 525.92), this protein is Chorismate synthase.